The following is a 1818-amino-acid chain: Unconventional myosin-Vb (1818 aa).

The 53-residue stretch at 8 to 60 (TRYTRVWIPDPDEVWRSAELTKDYKEGDKSLQLRLEDDTILEYPVDVQNNQVP) folds into the Myosin N-terminal SH3-like domain. The interval 21-40 (VWRSAELTKDYKEGDKSLQL) is requires for interaction with LIMA1. Residues 69–762 (VGENDLTALS…QVAYLEKLRA (694 aa)) form the Myosin motor domain. 163-170 (GESGAGKT) contacts ATP. The actin-binding stretch occupies residues 641–663 (LNLLMETLNATTPHYVRCIKPND). IQ domains lie at 765-794 (FREATIMIQKSVRGWLQRVKYRRLRAATLS), 788-817 (LRAATLSLQRFCRGYLARRLAEHLRRTRAA), 813-842 (RTRAAIVFQKQYRMLKARRAYRRVCRATVI), 836-865 (VCRATVIIQSFTRAMFVRRNYRQVLMEHKA), 861-890 (MEHKATIIQKYARGWMARKRFLRERDAAIV), and 884-913 (ERDAAIVIQCAFRRLKARQELKALKIEARS). Disordered regions lie at residues 1086-1120 (LRDEQTPGHRKNPSNQSSLESDSNYPSISTSEIGD) and 1161-1188 (QAQLEKGQQDSKKGQVEQQNNGLDVDQD). The segment covering 1098–1118 (PSNQSSLESDSNYPSISTSEI) has biased composition (polar residues). Coiled-coil stretches lie at residues 1140–1261 (MTVF…LILR) and 1313–1415 (LEAQ…ALAQ). Phosphoserine is present on serine 1416. In terms of domain architecture, Dilute spans 1496–1773 (SSTINGIKKV…IRTIQAQLQE (278 aa)).

This sequence belongs to the TRAFAC class myosin-kinesin ATPase superfamily. Myosin family. Component of the CART complex, at least composed of ACTN4, HGS/HRS, MYO5B and TRIM3. Interacts with RAB11FIP2. Interacts with RAB11A and RAB8A. Found in a complex with CFTR and RAB11A. Interacts with NPC1L1. Interacts with LIMA1.

It localises to the cytoplasm. In terms of biological role, may be involved in vesicular trafficking via its association with the CART complex. The CART complex is necessary for efficient transferrin receptor recycling but not for EGFR degradation. Required in a complex with RAB11A and RAB11FIP2 for the transport of NPC1L1 to the plasma membrane. Together with RAB11A participates in CFTR trafficking to the plasma membrane and TF (transferrin) recycling in nonpolarized cells. Together with RAB11A and RAB8A participates in epithelial cell polarization. Together with RAB25 regulates transcytosis. Required for proper localization of bile salt export pump ABCB11 at the apical/canalicular plasma membrane of hepatocytes. This is Unconventional myosin-Vb (Myo5b) from Mus musculus (Mouse).